Reading from the N-terminus, the 450-residue chain is Tubulin alpha-1 chain (450 aa).

GTP-binding residues include Gln-11, Glu-71, Gly-144, Thr-145, Thr-179, Asn-206, and Asn-228. Glu-71 provides a ligand contact to Mg(2+). Glu-254 is a catalytic residue. Residue Thr-349 is modified to Phosphothreonine. The segment at 431–450 (DYEEVGGEGAEDDDEEGDEY) is disordered.

This sequence belongs to the tubulin family. As to quaternary structure, dimer of alpha and beta chains. A typical microtubule is a hollow water-filled tube with an outer diameter of 25 nm and an inner diameter of 15 nM. Alpha-beta heterodimers associate head-to-tail to form protofilaments running lengthwise along the microtubule wall with the beta-tubulin subunit facing the microtubule plus end conferring a structural polarity. Microtubules usually have 13 protofilaments but different protofilament numbers can be found in some organisms and specialized cells. Mg(2+) serves as cofactor. Post-translationally, undergoes a tyrosination/detyrosination cycle, the cyclic removal and re-addition of a C-terminal tyrosine residue by the enzymes tubulin tyrosine carboxypeptidase (TTCP) and tubulin tyrosine ligase (TTL), respectively.

It is found in the cytoplasm. The protein resides in the cytoskeleton. The enzyme catalyses GTP + H2O = GDP + phosphate + H(+). In terms of biological role, tubulin is the major constituent of microtubules, a cylinder consisting of laterally associated linear protofilaments composed of alpha- and beta-tubulin heterodimers. Microtubules grow by the addition of GTP-tubulin dimers to the microtubule end, where a stabilizing cap forms. Below the cap, tubulin dimers are in GDP-bound state, owing to GTPase activity of alpha-tubulin. The protein is Tubulin alpha-1 chain (TUBA1) of Arabidopsis thaliana (Mouse-ear cress).